Consider the following 182-residue polypeptide: Dual-action ribosomal maturation protein DarP (182 aa).

This sequence belongs to the DarP family.

It is found in the cytoplasm. Member of a network of 50S ribosomal subunit biogenesis factors which assembles along the 30S-50S interface, preventing incorrect 23S rRNA structures from forming. Promotes peptidyl transferase center (PTC) maturation. This Yersinia pestis protein is Dual-action ribosomal maturation protein DarP.